Here is a 371-residue protein sequence, read N- to C-terminus: Putative glutamate--cysteine ligase 2 (371 aa).

This sequence belongs to the glutamate--cysteine ligase type 2 family. YbdK subfamily.

The catalysed reaction is L-cysteine + L-glutamate + ATP = gamma-L-glutamyl-L-cysteine + ADP + phosphate + H(+). Functionally, ATP-dependent carboxylate-amine ligase which exhibits weak glutamate--cysteine ligase activity. In Burkholderia multivorans (strain ATCC 17616 / 249), this protein is Putative glutamate--cysteine ligase 2.